Reading from the N-terminus, the 179-residue chain is Large ribosomal subunit protein uL5 (179 aa).

The protein belongs to the universal ribosomal protein uL5 family. As to quaternary structure, part of the 50S ribosomal subunit; part of the 5S rRNA/L5/L18/L25 subcomplex. Contacts the 5S rRNA and the P site tRNA. Forms a bridge to the 30S subunit in the 70S ribosome.

This is one of the proteins that bind and probably mediate the attachment of the 5S RNA into the large ribosomal subunit, where it forms part of the central protuberance. In the 70S ribosome it contacts protein S13 of the 30S subunit (bridge B1b), connecting the 2 subunits; this bridge is implicated in subunit movement. Contacts the P site tRNA; the 5S rRNA and some of its associated proteins might help stabilize positioning of ribosome-bound tRNAs. The sequence is that of Large ribosomal subunit protein uL5 from Geobacillus thermodenitrificans (strain NG80-2).